A 163-amino-acid polypeptide reads, in one-letter code: MAKESSFDIVSKVEFPEVQNAIQMTLKEIGTRYDFKGSKSDVTLEKEELVLISDDEFKLNQLKDVLSGKLIKRDVPTKNIEYGKIENASGGTVRQRAKLVQGIDKDNAKKINAVIKNSGLKVKSQIQDDQVRVTGKNKDDLQQIIAAVRGADLPIDVQFINFR.

Belongs to the YajQ family.

In terms of biological role, nucleotide-binding protein. This Bacillus velezensis (strain DSM 23117 / BGSC 10A6 / LMG 26770 / FZB42) (Bacillus amyloliquefaciens subsp. plantarum) protein is Nucleotide-binding protein RBAM_011030.